The chain runs to 212 residues: Thaumatin-like protein 1b (212 aa).

7 cysteine pairs are disulfide-bonded: Cys-47–Cys-57, Cys-62–Cys-69, Cys-117–Cys-200, Cys-122–Cys-183, Cys-130–Cys-146, Cys-150–Cys-159, and Cys-160–Cys-170.

The protein belongs to the thaumatin family.

It is found in the secreted. The protein is Thaumatin-like protein 1b of Malus domestica (Apple).